Reading from the N-terminus, the 571-residue chain is MGDEIVPPANQLAADNLENDGSTVQKAQFSDRVLIRSILGGGAKLAGQKVRIGGWVKTGRQQGKGTFAFLEVNDGSCPANLQVMVDSSLYDLSRLVATGTCVTVDGVLKIPPEGKGLKQSIELSVETVIAVGTVDPTTYPLPKTKLTPEFLRDVLHLRSRTNLISAVARIRNALAFATHSFFQEHSFLYIHTPIITTSDCEGAGEMFQVTTLINHTERVEQDLIDNPPPTEADVEAARLIVKERGEAVAQLKVAKASKEEITASVAQLSVAKASLAHVEERLRLKPGLPKNDGKIDYSNDFFGRQAFLTVSGQLQVETYACALSSVYTFGPTFRAENSHTSRHLAEFWMVEPEIAFADIHDDMNCAEAYVKYMCKWLMDKCGDDMELMDKNVDEGCTKRLNMVAKASFKRVTYTEAIERLEKAVAQGKVVFDNKVEWGIDLASEHERYLTEVEFDQKPIIVYNYPKGIKAFYMRLNDDEKTVAAMDVLVPKVGELIGGSQREERYDVIKQRIEEMGLPMEPYEWYLDLRRYGTVKHCGFGLGFERMIQFATGIDNIRDVIPFPRYPGKADL.

An N-acetylglycine modification is found at glycine 2. Residues 50 to 128 constitute a DNA-binding region (OB); that stretch reads VRIGGWVKTG…QSIELSVETV (79 aa). The WHEP-TRS domain occupies 233–289; that stretch reads DVEAARLIVKERGEAVAQLKVAKASKEEITASVAQLSVAKASLAHVEERLRLKPGLP.

The protein belongs to the class-II aminoacyl-tRNA synthetase family.

It is found in the cytoplasm. It localises to the cytosol. It carries out the reaction tRNA(Asn) + L-asparagine + ATP = L-asparaginyl-tRNA(Asn) + AMP + diphosphate + H(+). The chain is Asparagine--tRNA ligase, cytoplasmic 3 from Arabidopsis thaliana (Mouse-ear cress).